Consider the following 541-residue polypeptide: Imidazole glycerol phosphate synthase hisHF (541 aa).

Positions 2-214 (IVSIVDYGSG…LTGNYEQPIS (213 aa)) constitute a Glutamine amidotransferase type-1 domain. Residues Cys80, His189, and Glu191 each act as for GATase activity in the active site. Positions 228–541 (LTKRIIACLD…LAIHDVLVRT (314 aa)) are cyclase. Active-site residues include Asp237 and Asp396.

In the C-terminal section; belongs to the HisA/HisF family.

The catalysed reaction is 5-[(5-phospho-1-deoxy-D-ribulos-1-ylimino)methylamino]-1-(5-phospho-beta-D-ribosyl)imidazole-4-carboxamide + L-glutamine = D-erythro-1-(imidazol-4-yl)glycerol 3-phosphate + 5-amino-1-(5-phospho-beta-D-ribosyl)imidazole-4-carboxamide + L-glutamate + H(+). The enzyme catalyses L-glutamine + H2O = L-glutamate + NH4(+). Its pathway is amino-acid biosynthesis; L-histidine biosynthesis; L-histidine from 5-phospho-alpha-D-ribose 1-diphosphate: step 5/9. IGPS catalyzes the conversion of PRFAR and glutamine to IGP, AICAR and glutamate. The glutaminase domain produces the ammonia necessary for the cyclase domain to produce IGP and AICAR from PRFAR. The ammonia is channeled to the active site of the cyclase domain. This chain is Imidazole glycerol phosphate synthase hisHF (his4), found in Schizosaccharomyces pombe (strain 972 / ATCC 24843) (Fission yeast).